Reading from the N-terminus, the 359-residue chain is Medium-wave-sensitive opsin 1 (359 aa).

Residues 1–47 (MAQQLTGEQTLDHYEDSTQASIFTYTNSNSTRGPFEGPNYHIAPRWV) are Extracellular-facing. A required for 11-cis-retinal regeneration region spans residues 12 to 38 (DHYEDSTQASIFTYTNSNSTRGPFEGP). Asn29 carries N-linked (GlcNAc...) asparagine glycosylation. Residues 48-72 (YHLTSTWMILVVIASVFTNGLVLAA) form a helical membrane-spanning segment. Residues 73-84 (TMRFKKLRHPLN) lie on the Cytoplasmic side of the membrane. Residues 85–110 (WILVNLAVADLAETIIASTISVVNQI) traverse the membrane as a helical segment. Residues 111–124 (YGYFVLGHPLCVIE) lie on the Extracellular side of the membrane. A disulfide bond links Cys121 and Cys198. The helical transmembrane segment at 125-144 (GYIVSLCGITGLWSLAIISW) threads the bilayer. Over 145–163 (ERWLVVCKPFGNVRFDAKL) the chain is Cytoplasmic. Residues 164-187 (ATVGIVFSWVWAAVWTAPPIFGWS) form a helical membrane-spanning segment. The Extracellular portion of the chain corresponds to 188-213 (RYWPYGLKTSCGPDVFSGTSYPGVQS). Residues 214 to 241 (YMMVLMVTCCIFPLSIIVLCYLQVWLAI) form a helical membrane-spanning segment. Over 242–263 (RAVAKQQKESESTQKAEKEVTR) the chain is Cytoplasmic. A helical membrane pass occupies residues 264–287 (MVVVMVFAYCLCWGPYTFFACFAT). The Extracellular portion of the chain corresponds to 288–295 (AHPGYAFH). The helical transmembrane segment at 296–320 (PLVASLPSYFAKSATIYNPIIYVFM) threads the bilayer. N6-(retinylidene)lysine is present on Lys307. The Cytoplasmic segment spans residues 321 to 359 (NRQFRNCILQLFGKKVDDSSELSSTSKTEVSSVSSVSPA).

Belongs to the G-protein coupled receptor 1 family. Opsin subfamily. Monomer. Homodimer. Homotetramer. Post-translationally, O-glycosylated. In terms of processing, phosphorylated on some or all of the serine and threonine residues present in the C-terminal region. As to expression, expressed in cone photoreceptor cells.

The protein localises to the membrane. Visual pigments are the light-absorbing molecules that mediate vision. They consist of an apoprotein, opsin, covalently linked to cis-retinal. May increase spectral sensitivity in dim light. In Rattus norvegicus (Rat), this protein is Medium-wave-sensitive opsin 1 (Opn1mw).